A 493-amino-acid polypeptide reads, in one-letter code: Glycerol kinase (493 aa).

Position 12 (T12) interacts with ADP. Residues T12, T13, and S14 each coordinate ATP. T12 contributes to the sn-glycerol 3-phosphate binding site. Residue R16 participates in ADP binding. Residues R82, E83, Y132, and D239 each coordinate sn-glycerol 3-phosphate. Residues R82, E83, Y132, D239, and Q240 each contribute to the glycerol site. Residues T261 and G303 each contribute to the ADP site. Positions 261, 303, 307, and 402 each coordinate ATP. The ADP site is built by G402 and N406.

Belongs to the FGGY kinase family.

It catalyses the reaction glycerol + ATP = sn-glycerol 3-phosphate + ADP + H(+). Its pathway is polyol metabolism; glycerol degradation via glycerol kinase pathway; sn-glycerol 3-phosphate from glycerol: step 1/1. In terms of biological role, key enzyme in the regulation of glycerol uptake and metabolism. Catalyzes the phosphorylation of glycerol to yield sn-glycerol 3-phosphate. The chain is Glycerol kinase from Thermococcus onnurineus (strain NA1).